We begin with the raw amino-acid sequence, 428 residues long: Trigger factor (428 aa).

Residues Gly-163–Pro-248 form the PPIase FKBP-type domain.

Belongs to the FKBP-type PPIase family. Tig subfamily.

It localises to the cytoplasm. It catalyses the reaction [protein]-peptidylproline (omega=180) = [protein]-peptidylproline (omega=0). In terms of biological role, involved in protein export. Acts as a chaperone by maintaining the newly synthesized protein in an open conformation. Functions as a peptidyl-prolyl cis-trans isomerase. This chain is Trigger factor, found in Acetivibrio thermocellus (strain ATCC 27405 / DSM 1237 / JCM 9322 / NBRC 103400 / NCIMB 10682 / NRRL B-4536 / VPI 7372) (Clostridium thermocellum).